Here is a 348-residue protein sequence, read N- to C-terminus: Calcium homeostasis modulator protein 1 (348 aa).

The Cytoplasmic segment spans residues 1–20 (MDKFRMIFQFLQSNQESFMN). Positions 9-36 (QFLQSNQESFMNGICGIMALASAQMYSA) are central pore. Residues 21 to 36 (GICGIMALASAQMYSA) form a helical membrane-spanning segment. At 37–48 (FDFNCPCLPGYN) the chain is on the extracellular side. Cystine bridges form between Cys-41-Cys-126 and Cys-43-Cys-160. The helical transmembrane segment at 49 to 71 (VVYSLGILLTPPLVLFLLGLVMN) threads the bilayer. The interval 62 to 69 (VLFLLGLV) is phospholipid-binding. At 72–98 (NNISMLAEEWKRPAGRRAKDPAVLRYM) the chain is on the cytoplasmic side. The helical transmembrane segment at 99–124 (FCSMAQRALIAPVVWVAVTLLDGKCF) threads the bilayer. A lipid anchor (S-palmitoyl cysteine) is attached at Cys-100. Residues 104–116 (QRALIAPVVWVAV) form a phospholipid-binding region. Residues 125 to 179 (LCAFCTAVPVATLGNGSLVPGLPAPELARLLARVPCPEIYDGNWLLAREVAVRYL) are Extracellular-facing. N-linked (GlcNAc...) asparagine glycosylation is present at Asn-139. The chain crosses the membrane as a helical span at residues 180–205 (RCISQALGWSFVLLTTLLAFVVRSVR). The phospholipid-binding stretch occupies residues 191–201 (VLLTTLLAFVV). Over 206–348 (PCFTQVAFLK…KEVATYFSKV (143 aa)) the chain is Cytoplasmic. Cys-207 carries the S-palmitoyl cysteine lipid modification. Positions 324–348 (LMSNGWAGGEPRPPRKEVATYFSKV) are disordered.

This sequence belongs to the CALHM family. As to quaternary structure, oligomerizes to form hexamers and octamers. Does not form gap junctions. Associates with CALHM3 as a pore-forming subunit in a hetero-hexameric channel complex. Post-translationally, N-glycosylated. Assembly with CALHM3 is associated with N-glycan remodeling and formation of hybrid complex- and high mannose-type glycochains. This N-glycan processing regulates channel trafficking and gating kinetics. In terms of processing, palmitoylated by ZDHHC3, ZDHHC20 and possibly ZDHHC7. Palmitoylation regulates voltage-dependent gating of the channel by shifting it toward more depolarized potentials. In terms of tissue distribution, specifically expressed in type II taste bud cells (at protein level). Not expressed in brain.

The protein localises to the cell membrane. It is found in the endoplasmic reticulum membrane. It localises to the basolateral cell membrane. The catalysed reaction is ATP(in) = ATP(out). It catalyses the reaction Ca(2+)(in) = Ca(2+)(out). The enzyme catalyses Mg(2+)(in) = Mg(2+)(out). It carries out the reaction Na(+)(in) = Na(+)(out). The catalysed reaction is K(+)(in) = K(+)(out). It catalyses the reaction Li(+)(in) = Li(+)(out). The enzyme catalyses Rb(+)(in) = Rb(+)(out). It carries out the reaction Cs(+)(in) = Cs(+)(out). The catalysed reaction is chloride(in) = chloride(out). Regulated by membrane voltage and extracellular Ca(2+). Inhibited by Gd(3+), ruthenium red, and Zn(2+) and partially inhibited by 2-aminoethoxydiphenyl borate. Functionally, pore-forming subunit of gustatory voltage-gated ion channels required for sensory perception of sweet, bitter and umami tastes. With CALHM3 forms a fast-activating voltage-gated ATP-release channel in type II taste bud cells, ATP acting as a neurotransmitter to activate afferent neural gustatory pathways. Acts both as a voltage-gated and calcium-activated ion channel: mediates neuronal excitability in response to membrane depolarization and low extracellular Ca(2+) concentration. Has poor ion selectivity and forms a wide pore (around 14 Angstroms) that mediates permeation of small ions including Ca(2+), Na(+), K(+) and Cl(-), as well as larger ions such as ATP(4-). Mediates Ca(2+) influx and downstream activation of the ERK1 and ERK2 cascade in neurons. Triggers endoplasmic reticulum stress by reducing the calcium content of the endoplasmic reticulum. May indirectly control amyloid precursor protein (APP) proteolysis and aggregated amyloid-beta (Abeta) peptides levels in a Ca(2+) dependent manner. This Mus musculus (Mouse) protein is Calcium homeostasis modulator protein 1.